Here is a 296-residue protein sequence, read N- to C-terminus: MSNQDLKGSAVALVTPFREDFSIDTDALKQLVHFHAEAGTDIIIPCGTTGESPTLNPEEQADIIRIVRDEAKGKMLVAAGAGTNSTRSAVTLAKNAEDAGAEAILSVAPYYSKPSQEGIYQHYRHIAEAVSVPIIIYNVPGRTGCNVSAETILRLAGDFSNIAAVKEASDNFTQIADLLDGRPEHFSVLTGEDTLILPFMAMGGDGVISVAANQVPAAVKQLVDSAAAGNLEEARRISRTYRNLFRLNFIESNPAPIKCALAMMGMIKEVYRLPMTPVSEESRRQLSLEMSALGLI.

Thr49 serves as a coordination point for pyruvate. The active-site Proton donor/acceptor is the Tyr137. The active-site Schiff-base intermediate with substrate is Lys166. Ile208 contacts pyruvate.

This sequence belongs to the DapA family. Homotetramer; dimer of dimers.

It is found in the cytoplasm. It catalyses the reaction L-aspartate 4-semialdehyde + pyruvate = (2S,4S)-4-hydroxy-2,3,4,5-tetrahydrodipicolinate + H2O + H(+). It functions in the pathway amino-acid biosynthesis; L-lysine biosynthesis via DAP pathway; (S)-tetrahydrodipicolinate from L-aspartate: step 3/4. Functionally, catalyzes the condensation of (S)-aspartate-beta-semialdehyde [(S)-ASA] and pyruvate to 4-hydroxy-tetrahydrodipicolinate (HTPA). This Chlorobium phaeovibrioides (strain DSM 265 / 1930) (Prosthecochloris vibrioformis (strain DSM 265)) protein is 4-hydroxy-tetrahydrodipicolinate synthase.